The sequence spans 413 residues: Serine/threonine transporter SstT (413 aa).

9 helical membrane passes run Ile-21–Gly-41, Ser-61–Gly-81, Ile-89–Phe-109, Ile-146–Ile-166, Ile-189–Leu-209, Leu-224–Phe-244, Met-305–Ile-325, Leu-337–Ile-357, and Leu-363–Val-383.

The protein belongs to the dicarboxylate/amino acid:cation symporter (DAACS) (TC 2.A.23) family.

The protein localises to the cell inner membrane. The enzyme catalyses L-serine(in) + Na(+)(in) = L-serine(out) + Na(+)(out). The catalysed reaction is L-threonine(in) + Na(+)(in) = L-threonine(out) + Na(+)(out). Its function is as follows. Involved in the import of serine and threonine into the cell, with the concomitant import of sodium (symport system). This chain is Serine/threonine transporter SstT, found in Mannheimia succiniciproducens (strain KCTC 0769BP / MBEL55E).